An 80-amino-acid polypeptide reads, in one-letter code: Cell division protein ZapB (80 aa).

Positions Phe3–Gln80 form a coiled coil.

It belongs to the ZapB family. Homodimer. The ends of the coiled-coil dimer bind to each other, forming polymers. Interacts with FtsZ.

It localises to the cytoplasm. In terms of biological role, non-essential, abundant cell division factor that is required for proper Z-ring formation. It is recruited early to the divisome by direct interaction with FtsZ, stimulating Z-ring assembly and thereby promoting cell division earlier in the cell cycle. Its recruitment to the Z-ring requires functional FtsA or ZipA. This chain is Cell division protein ZapB, found in Proteus mirabilis (strain HI4320).